The sequence spans 504 residues: 2,3-bisphosphoglycerate-independent phosphoglycerate mutase (504 aa).

Residues aspartate 9 and serine 59 each coordinate Mn(2+). The Phosphoserine intermediate role is filled by serine 59. Substrate-binding positions include histidine 120, 149 to 150 (RD), arginine 181, arginine 187, 253 to 256 (RPDR), and lysine 326. Mn(2+) is bound by residues aspartate 393, histidine 397, aspartate 434, histidine 435, and histidine 451.

The protein belongs to the BPG-independent phosphoglycerate mutase family. Mn(2+) serves as cofactor.

The enzyme catalyses (2R)-2-phosphoglycerate = (2R)-3-phosphoglycerate. Its pathway is carbohydrate degradation; glycolysis; pyruvate from D-glyceraldehyde 3-phosphate: step 3/5. Its function is as follows. Catalyzes the interconversion of 2-phosphoglycerate and 3-phosphoglycerate. The protein is 2,3-bisphosphoglycerate-independent phosphoglycerate mutase of Haloquadratum walsbyi (strain DSM 16790 / HBSQ001).